The sequence spans 302 residues: Flavin-dependent thymidylate synthase (302 aa).

Residues 43–257 (GFVRVIDYMG…PFAYKAFEDY (215 aa)) enclose the ThyX domain. Residues Thr-89, 112-114 (RHR), and Glu-120 each bind FAD. Residues 109–112 (QWIR), 120–124 (EYSAR), and Arg-196 contribute to the dUMP site. The ThyX motif signature appears at 112-122 (RHRTANVNEYS). FAD-binding positions include 212 to 214 (DLH) and His-218. Residue Arg-223 coordinates dUMP. The Involved in ionization of N3 of dUMP, leading to its activation role is filled by Arg-223.

Belongs to the thymidylate synthase ThyX family. As to quaternary structure, homotetramer. It depends on FAD as a cofactor.

It catalyses the reaction dUMP + (6R)-5,10-methylene-5,6,7,8-tetrahydrofolate + NADPH + H(+) = dTMP + (6S)-5,6,7,8-tetrahydrofolate + NADP(+). It functions in the pathway pyrimidine metabolism; dTTP biosynthesis. In terms of biological role, catalyzes the reductive methylation of 2'-deoxyuridine-5'-monophosphate (dUMP) to 2'-deoxythymidine-5'-monophosphate (dTMP) while utilizing 5,10-methylenetetrahydrofolate (mTHF) as the methyl donor, and NADPH and FADH(2) as the reductant. The chain is Flavin-dependent thymidylate synthase from Ruegeria pomeroyi (strain ATCC 700808 / DSM 15171 / DSS-3) (Silicibacter pomeroyi).